A 224-amino-acid chain; its full sequence is ATP phosphoribosyltransferase (224 aa).

It belongs to the ATP phosphoribosyltransferase family. Short subfamily. Heteromultimer composed of HisG and HisZ subunits.

Its subcellular location is the cytoplasm. It carries out the reaction 1-(5-phospho-beta-D-ribosyl)-ATP + diphosphate = 5-phospho-alpha-D-ribose 1-diphosphate + ATP. It functions in the pathway amino-acid biosynthesis; L-histidine biosynthesis; L-histidine from 5-phospho-alpha-D-ribose 1-diphosphate: step 1/9. In terms of biological role, catalyzes the condensation of ATP and 5-phosphoribose 1-diphosphate to form N'-(5'-phosphoribosyl)-ATP (PR-ATP). Has a crucial role in the pathway because the rate of histidine biosynthesis seems to be controlled primarily by regulation of HisG enzymatic activity. The chain is ATP phosphoribosyltransferase from Cupriavidus metallidurans (strain ATCC 43123 / DSM 2839 / NBRC 102507 / CH34) (Ralstonia metallidurans).